Consider the following 365-residue polypeptide: uncharacterized protein (365 aa).

6 consecutive transmembrane segments (helical) span residues 3 to 23 (MDTS…LYSI), 60 to 80 (IGII…LNII), 100 to 120 (VFLF…LIAI), 141 to 161 (SGIL…GDEF), 171 to 191 (AIAS…IPLL), and 280 to 300 (TALF…LALF).

The protein to S.solfataricus C04034.

It is found in the cell membrane. This is an uncharacterized protein from Methanocaldococcus jannaschii (strain ATCC 43067 / DSM 2661 / JAL-1 / JCM 10045 / NBRC 100440) (Methanococcus jannaschii).